The primary structure comprises 387 residues: Ubiquitin-conjugating enzyme E2 25 (387 aa).

Residues 117–164 (APPVRDDIDEGRGSDISDTTSEPIDDDMAGDGEVDDDDEEEEDDEDAD) form a disordered region. Residues 120 to 131 (VRDDIDEGRGSD) are compositionally biased toward basic and acidic residues. The span at 139–164 (PIDDDMAGDGEVDDDDEEEEDDEDAD) shows a compositional bias: acidic residues. One can recognise a UBC core domain in the interval 214-380 (TATDRLMKEI…QQIHAKSGWY (167 aa)). Cys315 serves as the catalytic Glycyl thioester intermediate.

This sequence belongs to the ubiquitin-conjugating enzyme family. In terms of tissue distribution, in the embryo, expressed in precursor neuron and muscle cells and in other cells such as hypodermal cells. After hatching of L1 larvae and in all subsequent stages, strongest expression in pharyngeal muscle and anal muscle cells. In L4 larvae and adolescent hermaphrodites, also expressed in the vulval muscles. Expression also detected in all four nerve cords and in neurons with weaker levels in all body wall muscles.

The protein localises to the cytoplasm. It is found in the nucleus. It catalyses the reaction S-ubiquitinyl-[E1 ubiquitin-activating enzyme]-L-cysteine + [E2 ubiquitin-conjugating enzyme]-L-cysteine = [E1 ubiquitin-activating enzyme]-L-cysteine + S-ubiquitinyl-[E2 ubiquitin-conjugating enzyme]-L-cysteine.. It functions in the pathway protein modification; protein ubiquitination. Functionally, catalyzes the covalent attachment of ubiquitin to other proteins (Potential). Required for the maintenance of neuromuscular function. This chain is Ubiquitin-conjugating enzyme E2 25, found in Caenorhabditis elegans.